A 607-amino-acid polypeptide reads, in one-letter code: Protein NRT1/ PTR FAMILY 1.2 (607 aa).

10 consecutive transmembrane segments (helical) span residues 65 to 85 (TNVL…GAFL), 96 to 116 (ISIA…TAML), 138 to 158 (ASQL…SGGI), 185 to 205 (FFGW…TGIV), 215 to 235 (IGFG…ILAS), 374 to 394 (VPAG…VILY), 418 to 438 (MGLG…VESF), 460 to 480 (AMWL…TAIG), 496 to 516 (IAAS…SVVL), and 544 to 564 (YYWV…ICSW). A Phosphoserine modification is found at Ser601.

This sequence belongs to the major facilitator superfamily. Proton-dependent oligopeptide transporter (POT/PTR) (TC 2.A.17) family. In terms of tissue distribution, expressed in shoots, stems, leaves, flowers and siliques. Mainly detected in larger expanded leaves, in the companion cells of major veins.

It localises to the cell membrane. Functionally, low-affinity nitrate transporter involved in xylem-to-phloem transfer for redistributing nitrate into developing leaves. Not involved in dipeptides transport. The protein is Protein NRT1/ PTR FAMILY 1.2 (NPF1.2) of Arabidopsis thaliana (Mouse-ear cress).